The primary structure comprises 175 residues: Large ribosomal subunit protein uL18 (175 aa).

It belongs to the universal ribosomal protein uL18 family. Part of the 50S ribosomal subunit. Contacts the 5S and 23S rRNAs.

This is one of the proteins that bind and probably mediate the attachment of the 5S RNA into the large ribosomal subunit, where it forms part of the central protuberance. The sequence is that of Large ribosomal subunit protein uL18 from Methanosphaerula palustris (strain ATCC BAA-1556 / DSM 19958 / E1-9c).